A 456-amino-acid chain; its full sequence is Phospholipase A1 member A (456 aa).

Positions 1–25 (MPPGPWESCFWVGGLILWLSVGSSG) are cleaved as a signal peptide. Asn79 carries an N-linked (GlcNAc...) asparagine glycan. The active-site Nucleophile is the Ser166. Asp190 serves as the catalytic Charge relay system. Cysteines 245 and 258 form a disulfide. The active-site Charge relay system is the His260. 2 disulfide bridges follow: Cys282/Cys293 and Cys296/Cys304. N-linked (GlcNAc...) asparagine glycosylation occurs at Asn365. The segment at 374 to 456 (IPKQQRYGKG…VSCDLKIACV (83 aa)) is involved in the recognition of diacyl-phospholipids.

This sequence belongs to the AB hydrolase superfamily. Lipase family. As to expression, widely expressed. Expressed in placenta, prostate and liver. Weakly or not expressed in skin, leukocytes, platelets, colon, spleen, lung, muscle and kidney.

Its subcellular location is the secreted. The enzyme catalyses a 1,2-diacyl-sn-glycero-3-phospho-L-serine + H2O = a 2-acyl-sn-glycero-3-phospho-L-serine + a fatty acid + H(+). It catalyses the reaction 1,2-di-(9Z)-octadecenoyl-sn-glycero-3-phospho-L-serine + H2O = 2-(9Z-octadecenoyl)-sn-glycero-3-phospho-L-serine + (9Z)-octadecenoate + H(+). It carries out the reaction 1-hexadecanoyl-2-(5Z,8Z,11Z,14Z-eicosatetraenoyl)-sn-glycero-3-phospho-L-serine + H2O = 2-(5Z,8Z,11Z,14Z)-eicosatetraenoyl-sn-glycero-3-phospho-L-serine + hexadecanoate + H(+). The catalysed reaction is a 1-acyl-sn-glycero-3-phospho-L-serine + H2O = sn-glycero-3-phospho-L-serine + a fatty acid + H(+). The enzyme catalyses 1-(9Z-octadecenoyl)-sn-glycero-3-phospho-L-serine + H2O = sn-glycero-3-phospho-L-serine + (9Z)-octadecenoate + H(+). In terms of biological role, hydrolyzes the ester bond of the acyl group attached at the sn-1 position of phosphatidylserines (phospholipase A1 activity) and 1-acyl-2-lysophosphatidylserines (lysophospholipase activity) in the pathway of phosphatidylserines acyl chain remodeling. Cleaves phosphatidylserines exposed on the outer leaflet of the plasma membrane of apoptotic cells producing 2-acyl-1-lysophosphatidylserines, which in turn enhance mast cell activation and histamine production. Has no activity toward other glycerophospholipids including phosphatidylcholines, phosphatidylethanolamines, phosphatidic acids or phosphatidylinositols, or glycerolipids such as triolein. Its function is as follows. Hydrolyzes lyso-PS but not PS. The sequence is that of Phospholipase A1 member A from Homo sapiens (Human).